A 278-amino-acid polypeptide reads, in one-letter code: MQPALAPAPHPSMQTSAQDHADQVLHDSLLAAQHLSQHPQQPRPQQPNAQPHHLQPTATTSPRDQNNIDPAISGGAMLPPSQPPAQPEPTVEDETPKTYGKRPLSTSKRAAQNRAAQRAFRQRKESYIRKLEEQVKEYEVMSQEYKALQAENYQLREYVINLQSRLLDSQGEVPELPGNIDLNQPRTEISVPQPAPRPGQAGASAPPQGSPQSQVSIANDDMNSLNRIAEAGLGMRKHPNEEAFLSNNFQARRGRGDETADPSETKTEPPTHGLPMVS.

The segment covering 1–10 (MQPALAPAPH) has biased composition (pro residues). Positions 1–121 (MQPALAPAPH…QNRAAQRAFR (121 aa)) are disordered. The span at 56–68 (PTATTSPRDQNNI) shows a compositional bias: polar residues. In terms of domain architecture, bZIP spans 103-166 (PLSTSKRAAQ…EYVINLQSRL (64 aa)). The basic motif stretch occupies residues 104 to 127 (LSTSKRAAQNRAAQRAFRQRKESY). Positions 109–119 (RAAQNRAAQRA) are enriched in low complexity. The leucine-zipper stretch occupies residues 131 to 162 (LEEQVKEYEVMSQEYKALQAENYQLREYVINL). The tract at residues 173–278 (VPELPGNIDL…PPTHGLPMVS (106 aa)) is disordered. A compositionally biased stretch (low complexity) spans 198-214 (PGQAGASAPPQGSPQSQ). Positions 215-226 (VSIANDDMNSLN) are enriched in polar residues. Over residues 254-269 (GRGDETADPSETKTEP) the composition is skewed to basic and acidic residues.

It belongs to the bZIP family.

Its subcellular location is the nucleus. Functionally, putative transcription factor. This chain is Putative transcription factor kapC (kapC), found in Emericella nidulans (strain FGSC A4 / ATCC 38163 / CBS 112.46 / NRRL 194 / M139) (Aspergillus nidulans).